Reading from the N-terminus, the 216-residue chain is Cytidylate kinase (216 aa).

G7–T15 is a binding site for ATP.

The protein belongs to the cytidylate kinase family. Type 1 subfamily.

It is found in the cytoplasm. The catalysed reaction is CMP + ATP = CDP + ADP. It carries out the reaction dCMP + ATP = dCDP + ADP. The protein is Cytidylate kinase of Chlamydia caviae (strain ATCC VR-813 / DSM 19441 / 03DC25 / GPIC) (Chlamydophila caviae).